We begin with the raw amino-acid sequence, 92 residues long: DNA-directed RNA polymerase subunit Rpo11 (92 aa).

This sequence belongs to the archaeal Rpo11/eukaryotic RPB11/RPC19 RNA polymerase subunit family. As to quaternary structure, part of the RNA polymerase complex.

Its subcellular location is the cytoplasm. The catalysed reaction is RNA(n) + a ribonucleoside 5'-triphosphate = RNA(n+1) + diphosphate. Its function is as follows. DNA-dependent RNA polymerase (RNAP) catalyzes the transcription of DNA into RNA using the four ribonucleoside triphosphates as substrates. In Pyrobaculum aerophilum (strain ATCC 51768 / DSM 7523 / JCM 9630 / CIP 104966 / NBRC 100827 / IM2), this protein is DNA-directed RNA polymerase subunit Rpo11.